The sequence spans 221 residues: Endo-1,4-beta-xylanase 11A (221 aa).

The N-terminal stretch at 1 to 17 is a signal peptide; the sequence is MVSFTTLLTAVATAVSA. The region spanning 28 to 218 is the GH11 domain; that stretch reads RGIQPGTGVH…SSGSAEIEVR (191 aa). N-linked (GlcNAc...) asparagine glycosylation occurs at Asn89. Catalysis depends on Glu113, which acts as the Nucleophile. The active-site Proton donor is Glu205.

This sequence belongs to the glycosyl hydrolase 11 (cellulase G) family.

It localises to the secreted. It carries out the reaction Endohydrolysis of (1-&gt;4)-beta-D-xylosidic linkages in xylans.. It functions in the pathway glycan degradation; xylan degradation. Its activity is regulated as follows. Retains an activity of 52.5% in the presence of 5 mM SDS. Endo-1,4-beta-xylanase involved in the hydrolysis of xylan, a major structural heterogeneous polysaccharide found in plant biomass representing the second most abundant polysaccharide in the biosphere, after cellulose. Is an alkali-tolerant enzyme, exhibiting 50.6% of activity at pH 9.0, and 26.9% even at pH 10.0. This chain is Endo-1,4-beta-xylanase 11A, found in Humicola insolens (Soft-rot fungus).